A 66-amino-acid chain; its full sequence is MLKIKNIRSVCKRFKKTASCNKFKYKKSNLRHILTKKSTKRKRKLRIKSFATKGDKKLILRCLPYK.

This sequence belongs to the bacterial ribosomal protein bL35 family.

The chain is Large ribosomal subunit protein bL35 from Wigglesworthia glossinidia brevipalpis.